A 326-amino-acid polypeptide reads, in one-letter code: MTEIKKLIVLTSGGDAPGMNAAIRAVVRTALHYQFEVYGATAGFAGLVNGQVVPLNSRAVANCIQRGGTILKTGRFENFRFKAVRDKAREFLKKLQIDAMIVLGGNGSFAGASKLYQEGGPQMIGIPCTIDNDIQGTDYCIGFDTACNTALQAIDKIRDTAFSHERNFLIEVMGRSSGFIAVNVGIAGGAEIIALPEFHVDIDTLTQKIKKQHGKKSASIIVAAEANQPGHSFEVAKQIKEKTGIEYRVCVLGHTQRGGTPTVKDRVLASLMGAQAIEALKKGLTEKMIAYQNGKIAVAPLPDPDNGTRYFADEALLRVNNIICAM.

Gly-14 is a binding site for ATP. 24 to 28 (RAVVR) is a binding site for ADP. ATP is bound by residues 75–76 (RF) and 105–108 (GNGS). Asn-106 is a Mg(2+) binding site. 129 to 131 (TID) provides a ligand contact to substrate. The active-site Proton acceptor is Asp-131. Arg-158 provides a ligand contact to ADP. Residues Arg-166 and 173-175 (MGR) contribute to the substrate site. ADP-binding positions include 189-191 (GAE), Lys-215, and 216-218 (KSA). Substrate contacts are provided by residues Glu-225, Arg-248, and 254–257 (HTQR).

This sequence belongs to the phosphofructokinase type A (PFKA) family. ATP-dependent PFK group I subfamily. Prokaryotic clade 'B1' sub-subfamily. As to quaternary structure, homotetramer. The cofactor is Mg(2+).

Its subcellular location is the cytoplasm. The enzyme catalyses beta-D-fructose 6-phosphate + ATP = beta-D-fructose 1,6-bisphosphate + ADP + H(+). The protein operates within carbohydrate degradation; glycolysis; D-glyceraldehyde 3-phosphate and glycerone phosphate from D-glucose: step 3/4. With respect to regulation, allosterically activated by ADP and other diphosphonucleosides, and allosterically inhibited by phosphoenolpyruvate. Catalyzes the phosphorylation of D-fructose 6-phosphate to fructose 1,6-bisphosphate by ATP, the first committing step of glycolysis. The chain is ATP-dependent 6-phosphofructokinase from Coxiella burnetii (strain RSA 493 / Nine Mile phase I).